A 326-amino-acid chain; its full sequence is tRNA-modifying protein YgfZ (326 aa).

Residues Trp27 and Trp189 each contribute to the folate site.

Belongs to the tRNA-modifying YgfZ family.

It localises to the cytoplasm. Folate-binding protein involved in regulating the level of ATP-DnaA and in the modification of some tRNAs. It is probably a key factor in regulatory networks that act via tRNA modification, such as initiation of chromosomal replication. This is tRNA-modifying protein YgfZ from Escherichia coli O139:H28 (strain E24377A / ETEC).